An 88-amino-acid polypeptide reads, in one-letter code: UPF0223 protein BH2638 (88 aa).

It belongs to the UPF0223 family.

The protein is UPF0223 protein BH2638 of Halalkalibacterium halodurans (strain ATCC BAA-125 / DSM 18197 / FERM 7344 / JCM 9153 / C-125) (Bacillus halodurans).